The chain runs to 239 residues: Eukaryotic translation initiation factor 6 (239 aa).

The protein belongs to the eIF-6 family. Monomer. Associates with the 60S ribosomal subunit.

It is found in the cytoplasm. The protein localises to the nucleus. The protein resides in the nucleolus. Binds to the 60S ribosomal subunit and prevents its association with the 40S ribosomal subunit to form the 80S initiation complex in the cytoplasm. May also be involved in ribosome biogenesis. This is Eukaryotic translation initiation factor 6 from Entamoeba dispar (strain ATCC PRA-260 / SAW760).